The sequence spans 166 residues: Cytochrome c-550 2 (166 aa).

The N-terminal stretch at 1-32 (MFSRQFGRLATLALALAVAGCAGGEQSTTAEA) is a signal peptide. Residues Cys-71, Cys-74, and His-75 each coordinate heme c.

The protein belongs to the cytochrome c family. PsbV subfamily. Heme c is required as a cofactor.

The protein resides in the cell inner membrane. Its function is as follows. Probable low-potential cytochrome c, might function in photosystem II (PSII). This Gloeobacter violaceus (strain ATCC 29082 / PCC 7421) protein is Cytochrome c-550 2 (psbV2).